The following is a 267-amino-acid chain: Probable ribosomal RNA small subunit methyltransferase A (267 aa).

L12, G37, E58, D83, and N100 together coordinate S-adenosyl-L-methionine.

This sequence belongs to the class I-like SAM-binding methyltransferase superfamily. rRNA adenine N(6)-methyltransferase family. RsmA subfamily.

Its subcellular location is the cytoplasm. Functionally, specifically dimethylates two adjacent adenosines in the loop of a conserved hairpin near the 3'-end of 16S rRNA in the 30S particle. May play a critical role in biogenesis of 30S subunits. The polypeptide is Probable ribosomal RNA small subunit methyltransferase A (Methanococcus maripaludis (strain DSM 14266 / JCM 13030 / NBRC 101832 / S2 / LL)).